The primary structure comprises 449 residues: Maltose-6'-phosphate glucosidase (449 aa).

F6 to D72 lines the NAD(+) pocket. Residues R95 and N149 each coordinate substrate. C171 is a Mn(2+) binding site. D172 (proton donor) is an active-site residue. H202 contacts Mn(2+). The Proton acceptor role is filled by Y265. Residue R285 coordinates substrate.

The protein belongs to the glycosyl hydrolase 4 family. In terms of assembly, homotetramer. Requires Mn(2+) as cofactor. Fe(2+) serves as cofactor. The cofactor is Co(2+). It depends on Ni(2+) as a cofactor. NAD(+) is required as a cofactor.

It carries out the reaction alpha-maltose 6'-phosphate + H2O = D-glucose 6-phosphate + D-glucose. With respect to regulation, cellobiose-6'-phosphate and 6-phospho-beta-D-glucopyranoside are not substrates but competitive inhibitors of GlvA. Its function is as follows. Hydrolyzes maltose-6'-phosphate and trehalose-6'-phosphate. Is involved in the catabolism of alpha-glycosides accumulated via a phosphoenolpyruvate-dependent maltose phosphotransferase system (PEP-PTS). Is also able to significantly catalyze the hydrolysis of both 6-phospho-alpha- and 6-phospho-beta-glucosides containing activated leaving groups such as p-nitrophenol and does so with retention and inversion, respectively, of the substrate anomeric configuration. In Bacillus subtilis (strain 168), this protein is Maltose-6'-phosphate glucosidase (glvA).